The sequence spans 73 residues: uncharacterized protein (73 aa).

This is an uncharacterized protein from Dictyostelium discoideum (Social amoeba).